Reading from the N-terminus, the 400-residue chain is Enoyl-[acyl-carrier-protein] reductase [NADH] (400 aa).

Residues 48–53 (GASTGY), 74–75 (FE), 111–112 (DA), and 139–140 (LA) contribute to the NAD(+) site. A substrate-binding site is contributed by Tyr225. Tyr235 (proton donor) is an active-site residue. NAD(+) contacts are provided by residues Lys244 and 273 to 275 (VVT).

This sequence belongs to the TER reductase family. As to quaternary structure, monomer.

It catalyses the reaction a 2,3-saturated acyl-[ACP] + NAD(+) = a (2E)-enoyl-[ACP] + NADH + H(+). It participates in lipid metabolism; fatty acid biosynthesis. In terms of biological role, involved in the final reduction of the elongation cycle of fatty acid synthesis (FAS II). Catalyzes the reduction of a carbon-carbon double bond in an enoyl moiety that is covalently linked to an acyl carrier protein (ACP). The polypeptide is Enoyl-[acyl-carrier-protein] reductase [NADH] (Burkholderia cenocepacia (strain HI2424)).